Here is a 170-residue protein sequence, read N- to C-terminus: Adenine phosphoribosyltransferase (170 aa).

Belongs to the purine/pyrimidine phosphoribosyltransferase family. Homodimer.

The protein resides in the cytoplasm. It carries out the reaction AMP + diphosphate = 5-phospho-alpha-D-ribose 1-diphosphate + adenine. It functions in the pathway purine metabolism; AMP biosynthesis via salvage pathway; AMP from adenine: step 1/1. Catalyzes a salvage reaction resulting in the formation of AMP, that is energically less costly than de novo synthesis. In Lactococcus lactis subsp. cremoris (strain MG1363), this protein is Adenine phosphoribosyltransferase.